The following is a 281-amino-acid chain: 4-diphosphocytidyl-2-C-methyl-D-erythritol kinase (281 aa).

Lysine 11 is an active-site residue. An ATP-binding site is contributed by 92–102 (LVSAGLAGGSA). Aspartate 132 is a catalytic residue.

This sequence belongs to the GHMP kinase family. IspE subfamily.

It catalyses the reaction 4-CDP-2-C-methyl-D-erythritol + ATP = 4-CDP-2-C-methyl-D-erythritol 2-phosphate + ADP + H(+). It participates in isoprenoid biosynthesis; isopentenyl diphosphate biosynthesis via DXP pathway; isopentenyl diphosphate from 1-deoxy-D-xylulose 5-phosphate: step 3/6. In terms of biological role, catalyzes the phosphorylation of the position 2 hydroxy group of 4-diphosphocytidyl-2C-methyl-D-erythritol. In Ehrlichia ruminantium (strain Gardel), this protein is 4-diphosphocytidyl-2-C-methyl-D-erythritol kinase.